Reading from the N-terminus, the 732-residue chain is Eukaryotic translation initiation factor 3 subunit B (732 aa).

Residues M1–A94 are sufficient for interaction with HCR1 and TIF32. The interval M1–F219 is sufficient for interaction with PIC8. Residues N37–D120 form the RRM domain. 4 WD repeats span residues A185–R224, P237–T280, E439–A481, and V507–N554.

It belongs to the eIF-3 subunit B family. As to quaternary structure, component of the eukaryotic translation initiation factor 3 (eIF-3) complex.

It is found in the cytoplasm. In terms of biological role, RNA-binding component of the eukaryotic translation initiation factor 3 (eIF-3) complex, which is involved in protein synthesis of a specialized repertoire of mRNAs and, together with other initiation factors, stimulates binding of mRNA and methionyl-tRNAi to the 40S ribosome. The eIF-3 complex specifically targets and initiates translation of a subset of mRNAs involved in cell proliferation. The polypeptide is Eukaryotic translation initiation factor 3 subunit B (Kluyveromyces lactis (strain ATCC 8585 / CBS 2359 / DSM 70799 / NBRC 1267 / NRRL Y-1140 / WM37) (Yeast)).